We begin with the raw amino-acid sequence, 347 residues long: S-adenosylmethionine:tRNA ribosyltransferase-isomerase (347 aa).

The protein belongs to the QueA family. As to quaternary structure, monomer.

The protein resides in the cytoplasm. The catalysed reaction is 7-aminomethyl-7-carbaguanosine(34) in tRNA + S-adenosyl-L-methionine = epoxyqueuosine(34) in tRNA + adenine + L-methionine + 2 H(+). Its pathway is tRNA modification; tRNA-queuosine biosynthesis. In terms of biological role, transfers and isomerizes the ribose moiety from AdoMet to the 7-aminomethyl group of 7-deazaguanine (preQ1-tRNA) to give epoxyqueuosine (oQ-tRNA). This chain is S-adenosylmethionine:tRNA ribosyltransferase-isomerase, found in Ectopseudomonas mendocina (strain ymp) (Pseudomonas mendocina).